Reading from the N-terminus, the 2053-residue chain is Integrator complex subunit 1 (2053 aa).

Disordered stretches follow at residues Lys-36–Ser-58 and Ser-249–Pro-285. Residues Asp-268–Ser-283 are compositionally biased toward polar residues. A helical transmembrane segment spans residues Leu-708–Asn-728.

This sequence belongs to the Integrator subunit 1 family. Belongs to the multiprotein complex Integrator, at least composed of IntS1, IntS2, IntS3, IntS4, omd/IntS5, IntS6, defl/IntS7, IntS8, IntS9, IntS10, IntS11, IntS12, asun/IntS13, IntS14 and IntS15. The core complex associates with protein phosphatase 2A subunits mts/PP2A and Pp2A-29B, to form the Integrator-PP2A (INTAC) complex. Within the complex, interacts with IntS12 and IntS9. Interaction with IntS12 is likely to be important for promoting 3'-end processing of snRNAs. Interacts with Mediator complex members Cdk8 and CycC.

Its subcellular location is the nucleus membrane. The protein localises to the nucleus. Functionally, component of the integrator complex, a multiprotein complex that terminates RNA polymerase II (Pol II) transcription in the promoter-proximal region of genes. The integrator complex provides a quality checkpoint during transcription elongation by driving premature transcription termination of transcripts that are unfavorably configured for transcriptional elongation: the complex terminates transcription by (1) catalyzing dephosphorylation of the C-terminal domain (CTD) of Pol II subunit Polr2A/Rbp1 and Spt5, and (2) degrading the exiting nascent RNA transcript via endonuclease activity. The integrator complex is also involved in the 3'-end processing of the U7 snRNA, and also the spliceosomal snRNAs U1, U2, U4 and U5. Required for the normal expression of the Integrator complex component IntS12. This chain is Integrator complex subunit 1, found in Drosophila melanogaster (Fruit fly).